Here is a 699-residue protein sequence, read N- to C-terminus: D-(-)-3-hydroxybutyrate oligomer hydrolase (699 aa).

The first 33 residues, 1–33 (MTAIRGGSRRAPGLALALLGGVLLGACHGDENA), serve as a signal peptide directing secretion. The Charge relay system role is filled by Ser-311.

This sequence belongs to the D-(-)-3-hydroxybutyrate oligomer hydrolase family.

Its subcellular location is the secreted. The catalysed reaction is (3R)-hydroxybutanoate dimer + H2O = 2 (R)-3-hydroxybutanoate + H(+). It participates in lipid metabolism; butanoate metabolism. Participates in the degradation of poly-3-hydroxybutyrate (PHB). It works downstream of poly(3-hydroxybutyrate) depolymerase, hydrolyzing D(-)-3-hydroxybutyrate oligomers of various length (3HB-oligomers) into 3HB-monomers. The sequence is that of D-(-)-3-hydroxybutyrate oligomer hydrolase from Burkholderia pseudomallei (strain 1106a).